The sequence spans 305 residues: Acetyl-coenzyme A carboxylase carboxyl transferase subunit beta (305 aa).

The CoA carboxyltransferase N-terminal domain occupies 27-296 (LWVKCSSCRE…SPAKAELAGR (270 aa)). The Zn(2+) site is built by C31, C34, C50, and C53. A C4-type zinc finger spans residues 31-53 (CSSCRELIYKKQLNDNLKVCPKC).

It belongs to the AccD/PCCB family. Acetyl-CoA carboxylase is a heterohexamer composed of biotin carboxyl carrier protein (AccB), biotin carboxylase (AccC) and two subunits each of ACCase subunit alpha (AccA) and ACCase subunit beta (AccD). It depends on Zn(2+) as a cofactor.

The protein localises to the cytoplasm. It carries out the reaction N(6)-carboxybiotinyl-L-lysyl-[protein] + acetyl-CoA = N(6)-biotinyl-L-lysyl-[protein] + malonyl-CoA. It functions in the pathway lipid metabolism; malonyl-CoA biosynthesis; malonyl-CoA from acetyl-CoA: step 1/1. Its function is as follows. Component of the acetyl coenzyme A carboxylase (ACC) complex. Biotin carboxylase (BC) catalyzes the carboxylation of biotin on its carrier protein (BCCP) and then the CO(2) group is transferred by the transcarboxylase to acetyl-CoA to form malonyl-CoA. In Chloroflexus aurantiacus (strain ATCC 29366 / DSM 635 / J-10-fl), this protein is Acetyl-coenzyme A carboxylase carboxyl transferase subunit beta.